Here is a 291-residue protein sequence, read N- to C-terminus: Popeye domain-containing protein 3 (291 aa).

An N-linked (GlcNAc...) asparagine glycan is attached at N4. 3 consecutive transmembrane segments (helical) span residues 27–44 (GAIYHLASILFVVGFMGG), 48–70 (FGLLYVFSLLGLGFLCSAVWAWV), and 77–99 (IFSWNFVLFVICFMQFVHIAYQV).

Belongs to the popeye family. Expressed predominantly in skeletal muscle (at protein level). Also detected in heart.

The protein resides in the membrane. In terms of biological role, may play a role in the maintenance of heart function mediated, at least in part, through cAMP-binding. May play a role in the regulation of KCNK2/TREK-1-mediated current amplitude. This Homo sapiens (Human) protein is Popeye domain-containing protein 3 (POPDC3).